Here is a 105-residue protein sequence, read N- to C-terminus: Zinc metalloproteinase/disintegrin (105 aa).

In terms of domain architecture, Peptidase M12B spans 1-3 (DEP). The Disintegrin domain maps to 11–96 (PPVCGNYFVE…AECTDRFQRN (86 aa)). 6 cysteine pairs are disulfide-bonded: Cys25–Cys43, Cys27–Cys38, Cys37–Cys60, Cys51–Cys57, Cys56–Cys82, and Cys69–Cys89. Residues 75–77 (ECD) carry the D/ECD-tripeptide motif. Residues 99–105 (PCQNNNG) constitute a propeptide that is removed on maturation.

It belongs to the venom metalloproteinase (M12B) family. P-III subfamily. As to quaternary structure, monomer. It depends on Zn(2+) as a cofactor. In terms of tissue distribution, expressed by the venom gland.

Its subcellular location is the secreted. In terms of biological role, impairs hemostasis in the envenomed animal. Its function is as follows. Inhibits platelet aggregation induced by ADP, thrombin, platelet-activating factor and collagen. Acts by inhibiting fibrinogen interaction with platelet receptors GPIIb/GPIIIa (ITGA2B/ITGB3). This chain is Zinc metalloproteinase/disintegrin, found in Gloydius brevicauda (Korean slamosa snake).